A 363-amino-acid chain; its full sequence is Ribosomal RNA small subunit methyltransferase H (363 aa).

Residues glycine 55–histidine 57, aspartate 75, aspartate 122, and glutamine 129 each bind S-adenosyl-L-methionine.

Belongs to the methyltransferase superfamily. RsmH family.

It localises to the cytoplasm. It catalyses the reaction cytidine(1402) in 16S rRNA + S-adenosyl-L-methionine = N(4)-methylcytidine(1402) in 16S rRNA + S-adenosyl-L-homocysteine + H(+). Functionally, specifically methylates the N4 position of cytidine in position 1402 (C1402) of 16S rRNA. The sequence is that of Ribosomal RNA small subunit methyltransferase H from Bordetella petrii (strain ATCC BAA-461 / DSM 12804 / CCUG 43448).